The primary structure comprises 673 residues: Armadillo repeat-containing protein 8 (673 aa).

Position 2 is an N-acetylalanine (A2). 14 ARM repeats span residues N51–M92, E95–T134, T138–K176, P178–F217, M224–R265, I269–E309, E313–K352, D374–R413, Q416–L455, S458–F497, Q501–S540, P543–D585, T588–W627, and Q634–A673. Phosphoserine is present on S337. Residue S512 is modified to Phosphoserine.

In terms of assembly, identified in the CTLH complex that contains GID4, RANBP9 and/or RANBP10, MKLN1, MAEA, RMND5A (or alternatively its paralog RMND5B), GID8, ARMC8, WDR26 and YPEL5. Within this complex, MAEA, RMND5A (or alternatively its paralog RMND5B), GID8, WDR26, and RANBP9 and/or RANBP10 form the catalytic core, while GID4, MKLN1, ARMC8 and YPEL5 have ancillary roles.

It localises to the nucleus. The protein resides in the cytoplasm. Component of the CTLH E3 ubiquitin-protein ligase complex that selectively accepts ubiquitin from UBE2H and mediates ubiquitination and subsequent proteasomal degradation of the transcription factor HBP1. This chain is Armadillo repeat-containing protein 8 (ARMC8), found in Pongo abelii (Sumatran orangutan).